Consider the following 688-residue polypeptide: ERI1 exoribonuclease 2 (688 aa).

Residues 37–226 (LIVVDFESTC…DDSRNTALLA (190 aa)) enclose the Exonuclease domain. Mg(2+) contacts are provided by aspartate 41, glutamate 43, and aspartate 156. The active-site Proton acceptor is glutamate 43. Residue glutamate 43 participates in AMP binding. Catalysis depends on histidine 213, which acts as the Proton acceptor. Histidine 213 contacts AMP. Aspartate 218 contributes to the Mg(2+) binding site. Residues 337–360 (VDQLHSPTLNPPLTMQKPSKSDQL) are compositionally biased toward polar residues. 2 disordered regions span residues 337–367 (VDQL…DSSK) and 523–546 (DPLL…TKRQ). Cysteine 594, cysteine 596, cysteine 619, and cysteine 631 together coordinate Zn(2+). A GRF-type zinc finger spans residues 594 to 640 (CKCGRRSKRLIVSNNGPNHGKAFYCCPVGKYQQDRKCCGYFKWEQTL).

This sequence belongs to the ERI2 family. The cofactor is Mg(2+).

This is ERI1 exoribonuclease 2 (Eri2) from Mus musculus (Mouse).